A 193-amino-acid chain; its full sequence is Major intrinsically disordered NOTCH2-binding receptor 1-like homolog (193 aa).

Ser82 is subject to Phosphoserine. The N-linked (GlcNAc...) asparagine glycan is linked to Asn128. Residues 172–192 (GLILLLVASILVTIVTLSTIF) form a helical membrane-spanning segment.

It belongs to the MINAR family. As to quaternary structure, interacts with NOTCH2. In terms of tissue distribution, widely expressed in the cortex and Purkinje cells of cerebellum. Expressed in the inner ear, mainly in the hair cells, spiral ganglia, the spiral limbus, and the stria vascularis.

It localises to the lysosome membrane. It is found in the endoplasmic reticulum membrane. Functionally, binds cholesterol and may regulate the distribution and homeostasis of cholesterol in hair cells. May play a role in angiogenesis. The protein is Major intrinsically disordered NOTCH2-binding receptor 1-like homolog of Mus musculus (Mouse).